The sequence spans 589 residues: Parathyroid hormone/parathyroid hormone-related peptide receptor (589 aa).

Positions 1-28 are cleaved as a signal peptide; that stretch reads MGAARIAPGLALLLCCPVLSSAYALVDA. The Extracellular segment spans residues 29-188; that stretch reads DDVMTKEEQI…REREVFDRLG (160 aa). Disulfide bonds link cysteine 48–cysteine 117, cysteine 108–cysteine 148, and cysteine 131–cysteine 170. The disordered stretch occupies residues 64–105; it reads ESDKGWASASTSGKPKKEKPSGKLHPESEEDKEVPTGSRPRG. A compositionally biased stretch (basic and acidic residues) spans 81–90; it reads EKPSGKLHPE. Residues asparagine 151, asparagine 161, asparagine 166, and asparagine 176 are each glycosylated (N-linked (GlcNAc...) asparagine). The helical transmembrane segment at 189 to 209 threads the bilayer; the sequence is MIYTVGYSVSLASLTVAVLIL. The Cytoplasmic segment spans residues 210–223; sequence AYFRRLHCTRNYIH. A helical transmembrane segment spans residues 224 to 244; the sequence is MHLFLSFMLRAVSIFVKDAVL. At 245 to 294 the chain is on the extracellular side; sequence YSGTALDEAERLTEEELRAIAQAPPPPAAAAGYVGCRVAVTFFLYFLATN. The helical transmembrane segment at 295-315 threads the bilayer; sequence YYWILVEGLYLHSLIFMAFFS. Topologically, residues 316–318 are cytoplasmic; it reads EKK. The helical transmembrane segment at 319–339 threads the bilayer; the sequence is YLWGFTVFGWGLPAIFVAVWV. The Extracellular portion of the chain corresponds to 340–360; it reads SVRATLANTGCWDLSSGNKKW. A helical membrane pass occupies residues 361-381; sequence IIQVPILASIVLNFILFINIV. Residues 382-404 are Cytoplasmic-facing; the sequence is RVLATKLRETNAGRCDTRQQYRK. The chain crosses the membrane as a helical span at residues 405 to 425; the sequence is LLKSTLVLMPLFGVHYIVFMA. The Extracellular portion of the chain corresponds to 426-439; the sequence is TPYTEVSGTLWQVQ. A helical transmembrane segment spans residues 440 to 460; that stretch reads MHYEMLFNSFQGFFVAIIYCF. Topologically, residues 461–589 are cytoplasmic; sequence CNGEVQAEIK…LLQEEWETVM (129 aa). The short motif at 473 to 476 is the Important for interaction with G proteins element; that stretch reads WSRW. The segment at 524 to 549 is disordered; it reads AATTNGHPPLPGHTKSGSPALQATPP. A Phosphothreonine modification is found at threonine 547.

This sequence belongs to the G-protein coupled receptor 2 family. Homodimer in the absence of bound ligand. Peptide hormone binding leads to dissociation of the homodimer. N-glycosylated.

The protein resides in the cell membrane. G-protein-coupled receptor for parathyroid hormone (PTH) and for parathyroid hormone-related peptide (PTHLH). Ligand binding causes a conformation change that triggers signaling via guanine nucleotide-binding proteins (G proteins) and modulates the activity of downstream effectors, such as adenylate cyclase (cAMP). PTH1R is coupled to G(s) G alpha proteins and mediates activation of adenylate cyclase activity. PTHLH dissociates from PTH1R more rapidly than PTH; as consequence, the cAMP response induced by PTHLH decays faster than the response induced by PTH. This is Parathyroid hormone/parathyroid hormone-related peptide receptor (PTH1R) from Bos taurus (Bovine).